A 236-amino-acid polypeptide reads, in one-letter code: UPF0257 lipoprotein YnfC (236 aa).

The N-terminal stretch at 1-16 (MKYKLLPCLLAILLTG) is a signal peptide. Cysteine 17 carries the N-palmitoyl cysteine lipid modification. Cysteine 17 carries the S-diacylglycerol cysteine lipid modification.

It belongs to the UPF0257 family.

The protein resides in the cell membrane. This Escherichia coli O81 (strain ED1a) protein is UPF0257 lipoprotein YnfC.